A 220-amino-acid chain; its full sequence is Dual specificity phosphatase 29 (220 aa).

The span at 1–15 (MTSGEVKTSLKNAYS) shows a compositional bias: polar residues. Positions 1–29 (MTSGEVKTSLKNAYSSAKRLSPKMEEEGE) are disordered. The Tyrosine-protein phosphatase domain occupies 54 to 202 (HVNEVWPKLY…LRELDKQLVQ (149 aa)). 146–153 (HCVMGRSR) contributes to the substrate binding site. Catalysis depends on Cys-147, which acts as the Phosphocysteine intermediate.

Belongs to the protein-tyrosine phosphatase family. Non-receptor class dual specificity subfamily. As to quaternary structure, homodimer. Interacts with PRKAA2.

It is found in the cytoplasm. The protein localises to the nucleus. It catalyses the reaction O-phospho-L-tyrosyl-[protein] + H2O = L-tyrosyl-[protein] + phosphate. The enzyme catalyses O-phospho-L-seryl-[protein] + H2O = L-seryl-[protein] + phosphate. It carries out the reaction O-phospho-L-threonyl-[protein] + H2O = L-threonyl-[protein] + phosphate. Its function is as follows. Dual specificity phosphatase able to dephosphorylate phosphotyrosine, phosphoserine and phosphothreonine residues within the same substrate, with a preference for phosphotyrosine as a substrate. Involved in the modulation of intracellular signaling cascades. In skeletal muscle regulates systemic glucose homeostasis by activating, AMPK, an energy sensor protein kinase. Affects MAP kinase signaling though modulation of the MAPK1/2 cascade in skeletal muscle promoting muscle cell differentiation, development and atrophy. This Homo sapiens (Human) protein is Dual specificity phosphatase 29.